The primary structure comprises 436 residues: WD repeat domain phosphoinositide-interacting protein 2 (436 aa).

One copy of the WD 1 repeat lies at 182–222 (AHDSPLAALAFDASGTKLATASEKGTVIRVFSIPEGQKLFE). Residues 223-226 (FRRG) carry the L/FRRG motif motif. WD repeat units follow at residues 228–267 (KRCVSICSLAFSMDGMFLSASSNTETVHIFKLETVKEKPQ) and 311–349 (GHKNICALATIQKIPRLLVGAADGYLYMYNLDPQEGGEC).

Belongs to the WD repeat PROPPIN family.

Its subcellular location is the preautophagosomal structure membrane. Component of the autophagy machinery that controls the major intracellular degradation process by which cytoplasmic materials are packaged into autophagosomes and delivered to lysosomes for degradation. Involved in an early step of the formation of preautophagosomal structures. The chain is WD repeat domain phosphoinositide-interacting protein 2 (WIPI2) from Gallus gallus (Chicken).